Consider the following 310-residue polypeptide: tRNA dimethylallyltransferase (310 aa).

Glycine 10 to serine 17 serves as a coordination point for ATP. Threonine 12–serine 17 is a substrate binding site. Interaction with substrate tRNA regions lie at residues aspartate 35–glutamine 38, glutamine 159–arginine 163, and lysine 274–arginine 281.

This sequence belongs to the IPP transferase family. In terms of assembly, monomer. Requires Mg(2+) as cofactor.

It catalyses the reaction adenosine(37) in tRNA + dimethylallyl diphosphate = N(6)-dimethylallyladenosine(37) in tRNA + diphosphate. Functionally, catalyzes the transfer of a dimethylallyl group onto the adenine at position 37 in tRNAs that read codons beginning with uridine, leading to the formation of N6-(dimethylallyl)adenosine (i(6)A). This is tRNA dimethylallyltransferase from Halorhodospira halophila (strain DSM 244 / SL1) (Ectothiorhodospira halophila (strain DSM 244 / SL1)).